The chain runs to 171 residues: Protein TraV (171 aa).

Residues 1–18 (MKQTSFFIPLLGTLLLYG) form the signal peptide. Residue cysteine 19 is the site of N-palmitoyl cysteine attachment. Cysteine 19 carries the S-diacylglycerol cysteine lipid modification.

The protein localises to the cell outer membrane. Involved in F pilus assembly. Appears to facilitate the polymerization of inner membrane-located pilin subunits into extracellular F pilus filaments. In Escherichia coli (strain K12), this protein is Protein TraV (traV).